The primary structure comprises 130 residues: Small ribosomal subunit protein uS9 (130 aa).

This sequence belongs to the universal ribosomal protein uS9 family.

This chain is Small ribosomal subunit protein uS9, found in Onion yellows phytoplasma (strain OY-M).